Here is a 556-residue protein sequence, read N- to C-terminus: Sphingomyelinase C (556 aa).

The first 27 residues, 1-27, serve as a signal peptide directing secretion; sequence MRIKKYTKVRLLVNCCLLLFFLIDCGA.

Its subcellular location is the secreted. The catalysed reaction is a sphingomyelin + H2O = phosphocholine + an N-acylsphing-4-enine + H(+). The chain is Sphingomyelinase C (sph) from Leptospira interrogans.